Here is a 407-residue protein sequence, read N- to C-terminus: tRNA pseudouridine synthase 4 (407 aa).

Residues 83 to 105 form a disordered region; the sequence is FRPAPPHPNDRNRRRRKSNRLPD. The active-site Nucleophile is aspartate 115. The segment at 274-298 is disordered; the sequence is TEQDINPQDGDEKINAKSPTTNSVT. A Phosphoserine modification is found at serine 291. The residue at position 293 (threonine 293) is a Phosphothreonine. A Phosphoserine modification is found at serine 296. At threonine 406 the chain carries Phosphothreonine.

It belongs to the pseudouridine synthase TruB family.

It localises to the nucleus. It is found in the mitochondrion. The catalysed reaction is uridine(55) in tRNA = pseudouridine(55) in tRNA. It carries out the reaction a uridine in mRNA = a pseudouridine in mRNA. Functionally, responsible for synthesis of pseudouridine from uracil-55 in the psi GC loop of transfer RNAs. Also catalyzes pseudouridylation of mRNAs with the consensus sequence 5'-GGUUCRA-3'. This Schizosaccharomyces pombe (strain 972 / ATCC 24843) (Fission yeast) protein is tRNA pseudouridine synthase 4.